Here is a 693-residue protein sequence, read N- to C-terminus: DNA ligase (693 aa).

Residues 43–47 (DEEYD), 92–93 (SL), and E123 contribute to the NAD(+) site. Catalysis depends on K125, which acts as the N6-AMP-lysine intermediate. Residues R146, E180, K296, and K320 each coordinate NAD(+). 4 residues coordinate Zn(2+): C414, C417, C433, and C438. The BRCT domain maps to 595-684 (VKYDVLKGLT…AKLKGYNFDE (90 aa)).

This sequence belongs to the NAD-dependent DNA ligase family. LigA subfamily. It depends on Mg(2+) as a cofactor. Mn(2+) serves as cofactor.

The catalysed reaction is NAD(+) + (deoxyribonucleotide)n-3'-hydroxyl + 5'-phospho-(deoxyribonucleotide)m = (deoxyribonucleotide)n+m + AMP + beta-nicotinamide D-nucleotide.. Functionally, DNA ligase that catalyzes the formation of phosphodiester linkages between 5'-phosphoryl and 3'-hydroxyl groups in double-stranded DNA using NAD as a coenzyme and as the energy source for the reaction. It is essential for DNA replication and repair of damaged DNA. The protein is DNA ligase of Thermotoga neapolitana (strain ATCC 49049 / DSM 4359 / NBRC 107923 / NS-E).